The sequence spans 639 residues: Tubulin--tyrosine ligase-like protein 12 (639 aa).

The TTL domain maps to 295 to 639 (PQGHVFRVHC…TDNCHVTRII (345 aa)). ATP is bound by residues 445 to 448 (SKYI), Lys-463, and Asp-465.

It belongs to the tubulin--tyrosine ligase family. Interacts with MAVS; the interaction prevents MAVS binding to TBK1 and IKBKE. Interacts (via N-terminus) with TBK1 (via protein kinase domain). Interacts (via TTL domain) with IKBKE (via protein kinase domain). Interacts with tubulin alpha. Interacts with histone H3 and histone H4 (when trimethylated at 'Lys-20' (H4K20me3)). Interacts with CBX3. Widely expressed with highest levels in brain, kidney, liver, lung, muscle and testis.

The protein localises to the cytoplasm. Its subcellular location is the midbody. The protein resides in the cytoskeleton. It localises to the microtubule organizing center. It is found in the centrosome. The protein localises to the spindle. Its subcellular location is the nucleus. Negatively regulates post-translational modifications of tubulin, including detyrosination of the C-terminus and polyglutamylation of glutamate residues. Also, indirectly promotes histone H4 trimethylation at 'Lys-20' (H4K20me3). Probably by controlling tubulin and/or histone H4 post-translational modifications, plays a role in mitosis and in maintaining chromosome number stability. During RNA virus-mediated infection, acts as a negative regulator of the RIG-I pathway by preventing MAVS binding to TBK1 and IKBKE. In Mus musculus (Mouse), this protein is Tubulin--tyrosine ligase-like protein 12.